We begin with the raw amino-acid sequence, 20 residues long: Non-specific lipid-transfer protein (20 aa).

Belongs to the plant LTP family. As to expression, leaf.

In terms of biological role, plant non-specific lipid-transfer proteins transfer phospholipids as well as galactolipids across membranes. May play a role in wax or cutin deposition in the cell walls of expanding epidermal cells and certain secretory tissues. The polypeptide is Non-specific lipid-transfer protein (Cannabis sativa (Hemp)).